We begin with the raw amino-acid sequence, 334 residues long: 5-formaminoimidazole-4-carboxamide-1-(beta)-D-ribofuranosyl 5'-monophosphate synthetase (334 aa).

The 5-amino-1-(5-phospho-beta-D-ribosyl)imidazole-4-carboxamide site is built by serine 10, histidine 11, serine 71, and histidine 75. An ATP-grasp domain is found at 78–325 (IELVENMKVP…IAMEIREAIE (248 aa)). ATP is bound by residues 132 to 142 (KPHGAKGGKGY), 173 to 176 (QEYV), and glutamate 204. Asparagine 232 is a binding site for 5-amino-1-(5-phospho-beta-D-ribosyl)imidazole-4-carboxamide. The Mg(2+) site is built by glutamate 270 and glutamate 283.

It belongs to the phosphohexose mutase family. Homotrimer and homohexamer. The cofactor is Mg(2+). It depends on Mn(2+) as a cofactor.

The enzyme catalyses 5-amino-1-(5-phospho-beta-D-ribosyl)imidazole-4-carboxamide + formate + ATP = 5-formamido-1-(5-phospho-D-ribosyl)imidazole-4-carboxamide + ADP + phosphate. It functions in the pathway purine metabolism; IMP biosynthesis via de novo pathway; 5-formamido-1-(5-phospho-D-ribosyl)imidazole-4-carboxamide from 5-amino-1-(5-phospho-D-ribosyl)imidazole-4-carboxamide (formate route): step 1/1. Catalyzes the ATP- and formate-dependent formylation of 5-aminoimidazole-4-carboxamide-1-beta-d-ribofuranosyl 5'-monophosphate (AICAR) to 5-formaminoimidazole-4-carboxamide-1-beta-d-ribofuranosyl 5'-monophosphate (FAICAR) in the absence of folates. The sequence is that of 5-formaminoimidazole-4-carboxamide-1-(beta)-D-ribofuranosyl 5'-monophosphate synthetase from Pyrococcus furiosus (strain ATCC 43587 / DSM 3638 / JCM 8422 / Vc1).